Consider the following 456-residue polypeptide: High mobility group B protein 6 (456 aa).

4 disordered regions span residues 1 to 42 (MATN…KSAK), 117 to 142 (SSLT…KRPS), 238 to 258 (AEQD…PKHP), and 349 to 389 (MLKK…YFLF). Residues 11 to 21 (KKPRNSRKALK) are compositionally biased toward basic residues. Positions 138–206 (TKRPSSSYVL…AYLQVIAKEK (69 aa)) form a DNA-binding region, HMG box 1. Residues 240–254 (QDNKKKNKKEKDPLK) are compositionally biased toward basic and acidic residues. The segment at residues 255–321 (PKHPVSAFLV…TYLQAMEEYK (67 aa)) is a DNA-binding region (HMG box 2). Residues 354–363 (EKTDNLIKKE) show a composition bias toward basic and acidic residues. The HMG box 3 DNA-binding region spans 379–447 (PKKPASSYFL…AYKKEVEAYN (69 aa)).

The protein localises to the nucleus. The protein is High mobility group B protein 6 (HMGB6) of Arabidopsis thaliana (Mouse-ear cress).